We begin with the raw amino-acid sequence, 79 residues long: Small cysteine-rich protein 2 (79 aa).

Positions 1–21 (MRSQHVLILLLGLVCASQVLG) are cleaved as a signal peptide. Residues 22–35 (KHLTKVKAKALHYD) constitute a propeptide that is removed on maturation.

This sequence belongs to the Cnidaria small cysteine-rich protein (SCRiP) family. delta subfamily. In terms of processing, contains 4 disulfide bonds.

The protein localises to the secreted. The protein resides in the nematocyst. Its function is as follows. This recombinant protein induces severe neurotoxicity on zebrafish larvae (Danio rerio) at a concentration of 230 mg/ml, but does not show toxicity when injected in blowfly larvae (Sarcophaga falculata). All fish incubated with this protein died within 200 minutes of exposure. Has also been claimed to be implied in calcification, but this function seems improbable. This Acropora millepora (Staghorn coral) protein is Small cysteine-rich protein 2.